Here is a 211-residue protein sequence, read N- to C-terminus: Probable endopeptidase cgR_2070 (211 aa).

Positions 1–35 are cleaved as a signal peptide; that stretch reads MGKHRRNNSNATRKAVAASAVALGATAAIASPAQA. The 115-residue stretch at 97–211 folds into the NlpC/P60 domain; the sequence is ASTGQAIVDA…YMPFHSAVRF (115 aa). Cys-127 functions as the Nucleophile in the catalytic mechanism. The active-site Proton acceptor is His-175. Residue His-187 is part of the active site.

It belongs to the peptidase C40 family.

Its subcellular location is the secreted. The polypeptide is Probable endopeptidase cgR_2070 (Corynebacterium glutamicum (strain R)).